The following is a 579-amino-acid chain: MQDQKQAVKRVTGAFALIDSLRRHGVQHIFGYPGGSNLPIYDEIYRAEQAGEIKHYLVRHEQGAAHAADGYARSTGKVGVCLATSGPGATNLVTGLATAYLDSVPVLAITGQVPRSALGTDAFQEIDIFGITLPIVKHSYLVREPSELPRIVVEAFHLAMSGRPGPVLIDIPKDVGNAQIDYIPVEPGSVRRVGYRPTERGNPRQINQALQLISEATKPLLYVGGGAIMAGAHAEIAELSERFQIPVTSTLMGKGRFDENHPLSLGIVGMLGMHGTAYANFAVMELDFVIAVGVRFDDRVAGTGDQFAHSAKVIHIDIDPAEVGKNRSTDVPIVGDVRQVLGDMLQRTYHWERKLSRNKPRNGTDLNQLREPIPLTVPHPEDGISPQDGDWELSHQCPDAFYTTDVGQHQMWAGQFVQNGPRRWMTSGGLGTMGYGLPAAVGVKVAHPHDTVTCISGDGSFQMNMQELGTIAQYGIGVKVIILNNGWLGMVRQWQHMFYNDRYEATNLEDGTPEFARLADVYGLEAMNVRQRKIYQRRLPKALSHKGPMILDVRVTRDEDCYPMVAPGHDNSDMMGLSS.

Residue glutamate 61 participates in thiamine diphosphate binding. FAD-binding positions include arginine 163, 274–295, and 317–336; these read HGTA…VGVR and DIDP…IVGD. Residues 408–487 form a thiamine pyrophosphate binding region; sequence QHQMWAGQFV…VKVIILNNGW (80 aa). 2 residues coordinate Mg(2+): aspartate 458 and asparagine 485.

This sequence belongs to the TPP enzyme family. Mg(2+) is required as a cofactor. It depends on thiamine diphosphate as a cofactor.

It catalyses the reaction 2 pyruvate + H(+) = (2S)-2-acetolactate + CO2. It functions in the pathway amino-acid biosynthesis; L-isoleucine biosynthesis; L-isoleucine from 2-oxobutanoate: step 1/4. Its pathway is amino-acid biosynthesis; L-valine biosynthesis; L-valine from pyruvate: step 1/4. The polypeptide is Acetolactate synthase (ilvY) (Arthrospira platensis (Spirulina platensis)).